A 186-amino-acid chain; its full sequence is Elongation factor P (186 aa).

It belongs to the elongation factor P family.

Its subcellular location is the cytoplasm. It participates in protein biosynthesis; polypeptide chain elongation. Functionally, involved in peptide bond synthesis. Stimulates efficient translation and peptide-bond synthesis on native or reconstituted 70S ribosomes in vitro. Probably functions indirectly by altering the affinity of the ribosome for aminoacyl-tRNA, thus increasing their reactivity as acceptors for peptidyl transferase. This is Elongation factor P from Cupriavidus necator (strain ATCC 17699 / DSM 428 / KCTC 22496 / NCIMB 10442 / H16 / Stanier 337) (Ralstonia eutropha).